Consider the following 267-residue polypeptide: Probable ribosomal RNA small subunit methyltransferase A (267 aa).

The S-adenosyl-L-methionine site is built by L12, G37, E58, D83, and N100.

The protein belongs to the class I-like SAM-binding methyltransferase superfamily. rRNA adenine N(6)-methyltransferase family. RsmA subfamily.

It localises to the cytoplasm. Its function is as follows. Specifically dimethylates two adjacent adenosines in the loop of a conserved hairpin near the 3'-end of 16S rRNA in the 30S particle. May play a critical role in biogenesis of 30S subunits. The polypeptide is Probable ribosomal RNA small subunit methyltransferase A (Methanococcus maripaludis (strain DSM 14266 / JCM 13030 / NBRC 101832 / S2 / LL)).